A 157-amino-acid polypeptide reads, in one-letter code: UPF0178 protein Nwi_2152 (157 aa).

Belongs to the UPF0178 family.

The polypeptide is UPF0178 protein Nwi_2152 (Nitrobacter winogradskyi (strain ATCC 25391 / DSM 10237 / CIP 104748 / NCIMB 11846 / Nb-255)).